A 618-amino-acid chain; its full sequence is Baculoviral IAP repeat-containing protein 2 (618 aa).

3 BIR repeats span residues 46–113 (ELYR…CSFI), 184–250 (EEAR…CPFL), and 269–336 (HAAR…CEFL). Residues Cys306, Cys309, His326, and Cys333 each coordinate Zn(2+). The 91-residue stretch at 453-543 (MASDDLSLIR…TLYKNLFVDK (91 aa)) folds into the CARD domain. The segment at 571–606 (CKVCMDKEVSVVFIPCGHLVVCQECAPSLRKCPICR) adopts an RING-type zinc-finger fold.

This sequence belongs to the IAP family. As to quaternary structure, interacts with DIABLO/SMAC and with PRSS25; these interactions inhibit apoptotic suppressor activity. Interacts with CASP9. Interacts (via BIR domains) with TRAF2; the interaction is required for IKBKE ubiquitination. Interacts with E2F1, RIPK1, RIPK2, RIPK3, RIPK4, BIRC5/survivin and USP19. HSP90AB1. Interacts with UBXN1. Interacts with GSK3B. Interacts with several death receptors, inclusing FAS, TNFRSF10A and TNFRSF10B. Recruited to TNFRSF10B in the absence of receptor stimulation. When TNFRSF10B is stimulated, further recruited to the receptor and cleaved by caspases. Proteolytic fragments remain associated with TNFRSF10B. Auto-ubiquitinated and degraded by the proteasome in apoptotic cells. Post-translationally, upon stimulation of death receptors, including TNFRSF10B, recruited to receptors and cleaved by caspases. Proteolytic fragments remain associated with the receptors. This cleavage presumably inactivates the protein. As to expression, present in many fetal and adult tissues. Mainly expressed in adult skeletal muscle, thymus, testis, ovary, and pancreas, low or absent in brain and peripheral blood leukocytes.

The protein localises to the cytoplasm. It is found in the nucleus. It carries out the reaction S-ubiquitinyl-[E2 ubiquitin-conjugating enzyme]-L-cysteine + [acceptor protein]-L-lysine = [E2 ubiquitin-conjugating enzyme]-L-cysteine + N(6)-ubiquitinyl-[acceptor protein]-L-lysine.. Its activity is regulated as follows. The CARD domain inhibits the activation of E3 ubiquitin ligase activity by preventing RING domain dimerization and E2 ubiquitin donor binding and activation. The CARD domain-mediated autoinhibition of the E3 ubiquitin-protein ligase activity suppresses cell proliferation and migration. USP19 regulates the stability of BIRC2/c-IAP1 by preventing its ubiquitination. In terms of biological role, multi-functional protein which regulates not only caspases and apoptosis, but also modulates inflammatory signaling and immunity, mitogenic kinase signaling, and cell proliferation, as well as cell invasion and metastasis. Acts as an E3 ubiquitin-protein ligase regulating NF-kappa-B signaling and regulates both canonical and non-canonical NF-kappa-B signaling by acting in opposite directions: acts as a positive regulator of the canonical pathway and suppresses constitutive activation of non-canonical NF-kappa-B signaling. The target proteins for its E3 ubiquitin-protein ligase activity include: RIPK1, RIPK2, RIPK3, RIPK4, CASP3, CASP7, CASP8, TRAF2, DIABLO/SMAC, MAP3K14/NIK, MAP3K5/ASK1, IKBKG/NEMO, IKBKE and MXD1/MAD1. Can also function as an E3 ubiquitin-protein ligase of the NEDD8 conjugation pathway, targeting effector caspases for neddylation and inactivation. Acts as an important regulator of innate immune signaling via regulation of Toll-like receptors (TLRs), Nodlike receptors (NLRs) and RIG-I like receptors (RLRs), collectively referred to as pattern recognition receptors (PRRs). Protects cells from spontaneous formation of the ripoptosome, a large multi-protein complex that has the capability to kill cancer cells in a caspase-dependent and caspase-independent manner. Suppresses ripoptosome formation by ubiquitinating RIPK1 and CASP8. Can stimulate the transcriptional activity of E2F1. Plays a role in the modulation of the cell cycle. This is Baculoviral IAP repeat-containing protein 2 (BIRC2) from Homo sapiens (Human).